Consider the following 102-residue polypeptide: NADH-quinone oxidoreductase subunit K (102 aa).

3 helical membrane-spanning segments follow: residues 5–25 (ITHYLTVSALMFTIGIAGIFL), 31–51 (IIILMSIELILLSVNINFVAF), and 66–86 (FVLTVAAAEAAIGLAILVVFF).

Belongs to the complex I subunit 4L family. As to quaternary structure, NDH-1 is composed of 14 different subunits. Subunits NuoA, H, J, K, L, M, N constitute the membrane sector of the complex.

The protein localises to the cell inner membrane. The catalysed reaction is a quinone + NADH + 5 H(+)(in) = a quinol + NAD(+) + 4 H(+)(out). Functionally, NDH-1 shuttles electrons from NADH, via FMN and iron-sulfur (Fe-S) centers, to quinones in the respiratory chain. The immediate electron acceptor for the enzyme in this species is believed to be ubiquinone. Couples the redox reaction to proton translocation (for every two electrons transferred, four hydrogen ions are translocated across the cytoplasmic membrane), and thus conserves the redox energy in a proton gradient. This Bartonella tribocorum (strain CIP 105476 / IBS 506) protein is NADH-quinone oxidoreductase subunit K.